The sequence spans 521 residues: HTH-type transcriptional regulatory protein TyrR (521 aa).

Residues 2–72 (RLEVFCQDRI…GVTDVRTVPY (71 aa)) enclose the ACT domain. The PAS domain maps to 78–120 (EHRVLSALLVAMPEPVFSVDLRTKVELANPAAQNLFNLDENKI). A Sigma-54 factor interaction domain is found at 207–436 (IVAVTPRMRQ…LKNALYRALT (230 aa)). ATP contacts are provided by residues 235–242 (GDTGTGKD) and 298–307 (ANGGSVLLDE). A DNA-binding region (H-T-H motif) is located at residues 489-509 (STRKLAKRLGVSHTAIANKLR).

In terms of assembly, homodimer. In presence of tyrosine (or high concentrations of phenylalanine or tryptophan) and ATP, it self-associates to form an hexamer.

Its subcellular location is the cytoplasm. In terms of biological role, dual transcriptional regulator of the TyrR regulon, which includes a number of genes coding for proteins involved in the biosynthesis or transport of the three aromatic amino acids, phenylalanine, tyrosine and tryptophan. These three aromatic amino acids act as effectors which bind to the TyrR protein to form an active regulatory protein. Acts by binding specifically to TyrR boxes in the promoter region of the target genes. The chain is HTH-type transcriptional regulatory protein TyrR from Enterobacter agglomerans (Erwinia herbicola).